The primary structure comprises 526 residues: tRNA-2-methylthio-N(6)-dimethylallyladenosine synthase (526 aa).

Positions 1 to 24 (MTQQLNHAKVNQHPGQATLPETAE) are disordered. The MTTase N-terminal domain occupies 28–144 (RTYEVKTYGC…LPTLLQRAEH (117 aa)). [4Fe-4S] cluster-binding residues include cysteine 37, cysteine 73, cysteine 107, cysteine 181, cysteine 185, and cysteine 188. The 237-residue stretch at 167–403 (RESAYAGWVS…MVVQEQVCEE (237 aa)) folds into the Radical SAM core domain. The 72-residue stretch at 406-477 (QKLIGTTVEL…PFFLIADSGV (72 aa)) folds into the TRAM domain.

It belongs to the methylthiotransferase family. MiaB subfamily. As to quaternary structure, monomer. [4Fe-4S] cluster is required as a cofactor.

It is found in the cytoplasm. The catalysed reaction is N(6)-dimethylallyladenosine(37) in tRNA + (sulfur carrier)-SH + AH2 + 2 S-adenosyl-L-methionine = 2-methylsulfanyl-N(6)-dimethylallyladenosine(37) in tRNA + (sulfur carrier)-H + 5'-deoxyadenosine + L-methionine + A + S-adenosyl-L-homocysteine + 2 H(+). Catalyzes the methylthiolation of N6-(dimethylallyl)adenosine (i(6)A), leading to the formation of 2-methylthio-N6-(dimethylallyl)adenosine (ms(2)i(6)A) at position 37 in tRNAs that read codons beginning with uridine. The polypeptide is tRNA-2-methylthio-N(6)-dimethylallyladenosine synthase (Corynebacterium glutamicum (strain R)).